Reading from the N-terminus, the 176-residue chain is Nicotinamide-nucleotide adenylyltransferase (176 aa).

Belongs to the archaeal NMN adenylyltransferase family.

It localises to the cytoplasm. The enzyme catalyses beta-nicotinamide D-ribonucleotide + ATP + H(+) = diphosphate + NAD(+). The protein operates within cofactor biosynthesis; NAD(+) biosynthesis; NAD(+) from nicotinamide D-ribonucleotide: step 1/1. This is Nicotinamide-nucleotide adenylyltransferase from Halorubrum lacusprofundi (strain ATCC 49239 / DSM 5036 / JCM 8891 / ACAM 34).